We begin with the raw amino-acid sequence, 96 residues long: Large ribosomal subunit protein uL18m (96 aa).

It belongs to the universal ribosomal protein uL18 family.

It is found in the mitochondrion. This chain is Large ribosomal subunit protein uL18m (RPL18), found in Reclinomonas americana.